We begin with the raw amino-acid sequence, 117 residues long: uncharacterized protein (117 aa).

It belongs to the transposase 34 family.

This is an uncharacterized protein from Sinorhizobium fredii (strain NBRC 101917 / NGR234).